Reading from the N-terminus, the 374-residue chain is Beta-lytic metalloendopeptidase (374 aa).

An N-terminal signal peptide occupies residues 1-24 (MKKISKAGLGLALVCALATIGGNA). Positions 25–195 (ARRATAQRRG…RQGRPGRAAV (171 aa)) are excised as a propeptide. The segment at 128–187 (PTRQGAGDAGPRQSAAGAVRAFRRQRAGGRAARRRRVPAGLRPPVQRTAPGQGGFGPLRQ) is disordered. Basic residues predominate over residues 148 to 164 (AFRRQRAGGRAARRRRV). A disulfide bond links C261 and C307. Positions 316 and 318 each coordinate Zn(2+). C351 and C364 form a disulfide bridge.

The protein belongs to the peptidase M23A family. Zn(2+) is required as a cofactor.

It localises to the secreted. It carries out the reaction Cleavage of N-acetylmuramoyl-|-Ala, and of the insulin B chain at 23-Gly-|-Phe-24 &gt; 18-Val-|-Cys(SO3H).. The polypeptide is Beta-lytic metalloendopeptidase (Achromobacter lyticus).